The primary structure comprises 22 residues: Brevinin-1OKd (22 aa).

A Lysine amide modification is found at Lys-22.

In terms of tissue distribution, expressed by the skin glands.

It localises to the secreted. Functionally, antimicrobial peptide. This Nidirana okinavana (Kampira Falls frog) protein is Brevinin-1OKd.